Reading from the N-terminus, the 459-residue chain is Glycosyl hydrolase family 109 protein (459 aa).

Residues 1-31 constitute a signal peptide (tat-type signal); sequence MHNIHRRHFLKAAGAVTAGLITANITASTHA. NAD(+)-binding positions include 64-65, D86, 135-138, 155-156, and N184; these read ER, WEWH, and EV. Residues Y213, R232, 244 to 247, and Y326 each bind substrate; that span reads YPTH. Position 244 (Y244) interacts with NAD(+).

This sequence belongs to the Gfo/Idh/MocA family. Glycosyl hydrolase 109 subfamily. NAD(+) is required as a cofactor. Post-translationally, predicted to be exported by the Tat system. The position of the signal peptide cleavage has not been experimentally proven.

Glycosidase. The protein is Glycosyl hydrolase family 109 protein of Shewanella putrefaciens (strain CN-32 / ATCC BAA-453).